Consider the following 1262-residue polypeptide: Structural maintenance of chromosomes protein 1 (1262 aa).

Residues 171-497 (SRSHEFQAEY…VAVVRQLSEA (327 aa)) are a coiled coil. The SMC hinge domain maps to 524-642 (SVYGRLVDLC…ESQEDAKQLA (119 aa)). The stretch at 680–937 (KKWDEKVVKQ…RLESLLTKKQ (258 aa)) forms a coiled coil. The segment at 965–994 (EYEEDDGDDTASQSSQSATDGPSVSEEQIQ) is disordered. A compositionally biased stretch (polar residues) spans 974–991 (TASQSSQSATDGPSVSEE). Residues 1017–1086 (DGVRQMSNRL…QQFEKVKTDR (70 aa)) are a coiled coil. Positions 1148–1183 (LSGGEKTIAALALLFAVHGRNPAPFFVLDEIDAALD) match the DA-box motif.

This sequence belongs to the SMC family. SMC1 subfamily. As to quaternary structure, component of the cohesin complex, composed of the smc-1 and smc-3 heterodimer attached via their SMC hinge domain, scc-1 which links them, and scc-3. Interacts with smc-3, scc-1, scc-3 and tim-1.

The protein resides in the nucleus. It is found in the chromosome. Its function is as follows. Involved in chromosome cohesion during cell cycle and in DNA repair. Required for chromosome segregation during mitosis. Central component of cohesin complex. The cohesin complex is required for the cohesion of sister chromatids after DNA replication. The cohesin complex apparently forms a large proteinaceous ring within which sister chromatids can be trapped. At anaphase, the complex is cleaved and dissociates from chromatin, allowing sister chromatids to segregate. In Caenorhabditis elegans, this protein is Structural maintenance of chromosomes protein 1.